A 317-amino-acid polypeptide reads, in one-letter code: Lipoyl synthase (317 aa).

The segment at 1 to 22 (MVTVVNTLNRPRHPEKQNRPET) is disordered. The segment covering 12-22 (RHPEKQNRPET) has biased composition (basic and acidic residues). Positions 57, 62, 68, 83, 87, 90, and 296 each coordinate [4Fe-4S] cluster. The 217-residue stretch at 69-285 (WEKKHATFMI…ETVAYAKGFL (217 aa)) folds into the Radical SAM core domain.

The protein belongs to the radical SAM superfamily. Lipoyl synthase family. The cofactor is [4Fe-4S] cluster.

Its subcellular location is the cytoplasm. It catalyses the reaction [[Fe-S] cluster scaffold protein carrying a second [4Fe-4S](2+) cluster] + N(6)-octanoyl-L-lysyl-[protein] + 2 oxidized [2Fe-2S]-[ferredoxin] + 2 S-adenosyl-L-methionine + 4 H(+) = [[Fe-S] cluster scaffold protein] + N(6)-[(R)-dihydrolipoyl]-L-lysyl-[protein] + 4 Fe(3+) + 2 hydrogen sulfide + 2 5'-deoxyadenosine + 2 L-methionine + 2 reduced [2Fe-2S]-[ferredoxin]. It functions in the pathway protein modification; protein lipoylation via endogenous pathway; protein N(6)-(lipoyl)lysine from octanoyl-[acyl-carrier-protein]: step 2/2. Its function is as follows. Catalyzes the radical-mediated insertion of two sulfur atoms into the C-6 and C-8 positions of the octanoyl moiety bound to the lipoyl domains of lipoate-dependent enzymes, thereby converting the octanoylated domains into lipoylated derivatives. This chain is Lipoyl synthase, found in Azorhizobium caulinodans (strain ATCC 43989 / DSM 5975 / JCM 20966 / LMG 6465 / NBRC 14845 / NCIMB 13405 / ORS 571).